Consider the following 260-residue polypeptide: Large ribosomal subunit protein uL2 (260 aa).

A disordered region spans residues 208-230 (EHPHGGGNHQHIGHPSTVRRDAS).

It belongs to the universal ribosomal protein uL2 family.

The protein resides in the cytoplasm. In Caenorhabditis elegans, this protein is Large ribosomal subunit protein uL2.